Here is a 459-residue protein sequence, read N- to C-terminus: Bifunctional protein GlmU (459 aa).

Residues 1-229 are pyrophosphorylase; it reads MSNYAIILAA…FDESLGVNDR (229 aa). UDP-N-acetyl-alpha-D-glucosamine-binding positions include 8–11, Lys22, Gln72, and 77–78; these read LAAG and GT. Asp102 contacts Mg(2+). Positions 139, 154, 169, and 227 each coordinate UDP-N-acetyl-alpha-D-glucosamine. Asn227 lines the Mg(2+) pocket. Residues 230-250 form a linker region; it reads VALATAEKVMRHRIARQHMVN. The segment at 251-459 is N-acetyltransferase; the sequence is GVTVVNPDSA…NKKPHHPSQK (209 aa). UDP-N-acetyl-alpha-D-glucosamine is bound by residues Arg332 and Lys350. His362 acts as the Proton acceptor in catalysis. Residues Tyr365 and Asn376 each coordinate UDP-N-acetyl-alpha-D-glucosamine. Residues Ala379, 385-386, Ser404, Ala422, and Arg439 contribute to the acetyl-CoA site; that span reads NY.

The protein in the N-terminal section; belongs to the N-acetylglucosamine-1-phosphate uridyltransferase family. It in the C-terminal section; belongs to the transferase hexapeptide repeat family. In terms of assembly, homotrimer. It depends on Mg(2+) as a cofactor.

The protein localises to the cytoplasm. It catalyses the reaction alpha-D-glucosamine 1-phosphate + acetyl-CoA = N-acetyl-alpha-D-glucosamine 1-phosphate + CoA + H(+). The catalysed reaction is N-acetyl-alpha-D-glucosamine 1-phosphate + UTP + H(+) = UDP-N-acetyl-alpha-D-glucosamine + diphosphate. It functions in the pathway nucleotide-sugar biosynthesis; UDP-N-acetyl-alpha-D-glucosamine biosynthesis; N-acetyl-alpha-D-glucosamine 1-phosphate from alpha-D-glucosamine 6-phosphate (route II): step 2/2. It participates in nucleotide-sugar biosynthesis; UDP-N-acetyl-alpha-D-glucosamine biosynthesis; UDP-N-acetyl-alpha-D-glucosamine from N-acetyl-alpha-D-glucosamine 1-phosphate: step 1/1. The protein operates within bacterial outer membrane biogenesis; LPS lipid A biosynthesis. In terms of biological role, catalyzes the last two sequential reactions in the de novo biosynthetic pathway for UDP-N-acetylglucosamine (UDP-GlcNAc). The C-terminal domain catalyzes the transfer of acetyl group from acetyl coenzyme A to glucosamine-1-phosphate (GlcN-1-P) to produce N-acetylglucosamine-1-phosphate (GlcNAc-1-P), which is converted into UDP-GlcNAc by the transfer of uridine 5-monophosphate (from uridine 5-triphosphate), a reaction catalyzed by the N-terminal domain. The chain is Bifunctional protein GlmU from Streptococcus agalactiae serotype III (strain NEM316).